Consider the following 259-residue polypeptide: UPF0246 protein NMB0895 (259 aa).

It belongs to the UPF0246 family.

The sequence is that of UPF0246 protein NMB0895 from Neisseria meningitidis serogroup B (strain ATCC BAA-335 / MC58).